Consider the following 224-residue polypeptide: UPF0758 protein VS_0182 (224 aa).

The interval 1–21 (MPISKMPVESMPREKLLSRGP) is disordered. The 123-residue stretch at 102–224 (ALTSPSHTKL…VISFAERGWI (123 aa)) folds into the MPN domain. The Zn(2+) site is built by H173, H175, and D186. The JAMM motif signature appears at 173-186 (HNHPSGVAEPSQAD).

It belongs to the UPF0758 family.

This chain is UPF0758 protein VS_0182, found in Vibrio atlanticus (strain LGP32) (Vibrio splendidus (strain Mel32)).